Consider the following 404-residue polypeptide: Tryptophan synthase beta chain (404 aa).

N6-(pyridoxal phosphate)lysine is present on lysine 98.

This sequence belongs to the TrpB family. In terms of assembly, tetramer of two alpha and two beta chains. It depends on pyridoxal 5'-phosphate as a cofactor.

The catalysed reaction is (1S,2R)-1-C-(indol-3-yl)glycerol 3-phosphate + L-serine = D-glyceraldehyde 3-phosphate + L-tryptophan + H2O. The protein operates within amino-acid biosynthesis; L-tryptophan biosynthesis; L-tryptophan from chorismate: step 5/5. In terms of biological role, the beta subunit is responsible for the synthesis of L-tryptophan from indole and L-serine. The protein is Tryptophan synthase beta chain of Rhodopseudomonas palustris (strain BisB18).